The chain runs to 260 residues: UPF0246 protein Cbei_1739 (260 aa).

Belongs to the UPF0246 family.

This chain is UPF0246 protein Cbei_1739, found in Clostridium beijerinckii (strain ATCC 51743 / NCIMB 8052) (Clostridium acetobutylicum).